The primary structure comprises 267 residues: MTKKIILRIAYQGTAYSGWQYQPNALSIQEVLETLLQKISRTRISVIASGRTDAGVHAQGQVAHFCCPDHPHFSDPGQIKKMLNALLPHDIVIRDVIATNEDFHSRFSAITKEYHYTLSLLPKPLPHHRLFCFSPRHKLCLESMREAAKYLVGTHDFASFANLGREYSSTVRTLYALDLLEQEHLVTVICKGNGFLYKMVRNIVGALLDIGKGKYPPEHLLEMLEKKDRKKGPPSAPPYGLSLHHVCYPSPYHWFCKHEHNSSNEEK.

Asp-53 (nucleophile) is an active-site residue. Position 114 (Tyr-114) interacts with substrate.

Belongs to the tRNA pseudouridine synthase TruA family. In terms of assembly, homodimer.

It catalyses the reaction uridine(38/39/40) in tRNA = pseudouridine(38/39/40) in tRNA. Formation of pseudouridine at positions 38, 39 and 40 in the anticodon stem and loop of transfer RNAs. This Chlamydia muridarum (strain MoPn / Nigg) protein is tRNA pseudouridine synthase A.